The following is a 318-amino-acid chain: tRNA dimethylallyltransferase (318 aa).

An ATP-binding site is contributed by 21-28 (GPTATGKS). Residue 23 to 28 (TATGKS) participates in substrate binding. The segment at 46–49 (DSMQ) is interaction with substrate tRNA.

This sequence belongs to the IPP transferase family. As to quaternary structure, monomer. The cofactor is Mg(2+).

The catalysed reaction is adenosine(37) in tRNA + dimethylallyl diphosphate = N(6)-dimethylallyladenosine(37) in tRNA + diphosphate. Catalyzes the transfer of a dimethylallyl group onto the adenine at position 37 in tRNAs that read codons beginning with uridine, leading to the formation of N6-(dimethylallyl)adenosine (i(6)A). The sequence is that of tRNA dimethylallyltransferase from Acidothermus cellulolyticus (strain ATCC 43068 / DSM 8971 / 11B).